Here is a 501-residue protein sequence, read N- to C-terminus: Aldehyde dehydrogenase 1A1 (501 aa).

Serine 2 is subject to N-acetylserine. N6-acetyllysine is present on residues lysine 91 and lysine 128. NAD(+) is bound by residues 167–170 (IPWN), 193–196 (KPAE), 226–227 (GP), and 246–247 (GS). Lysine 252 is subject to N6-acetyllysine. Glutamate 269 (proton acceptor) is an active-site residue. 269–271 (ELG) is an NAD(+) binding site. Cysteine 303 serves as the catalytic Nucleophile. The segment at 336–501 (LTPGATQGPQ…VTVKISQKNS (166 aa)) is mediates interaction with PRMT3. Position 337 is a phosphothreonine (threonine 337). 349–353 (EQYDK) is a binding site for NAD(+). An N6-acetyllysine mark is found at lysine 353 and lysine 367. Position 400–402 (400–402 (EIF)) interacts with NAD(+). Lysine 410 carries the N6-acetyllysine modification. Serine 413 bears the Phosphoserine mark. An N6-acetyllysine mark is found at lysine 419 and lysine 495.

It belongs to the aldehyde dehydrogenase family. In terms of assembly, homotetramer. Interacts with PRMT3; the interaction is direct, inhibits ALDH1A1 aldehyde dehydrogenase activity and is independent of the methyltransferase activity of PRMT3. Post-translationally, the N-terminus is blocked most probably by acetylation.

The protein resides in the cytoplasm. It localises to the cytosol. The protein localises to the cell projection. Its subcellular location is the axon. The catalysed reaction is an aldehyde + NAD(+) + H2O = a carboxylate + NADH + 2 H(+). It carries out the reaction all-trans-retinal + NAD(+) + H2O = all-trans-retinoate + NADH + 2 H(+). It catalyses the reaction 9-cis-retinal + NAD(+) + H2O = 9-cis-retinoate + NADH + 2 H(+). The enzyme catalyses 11-cis-retinal + NAD(+) + H2O = 11-cis-retinoate + NADH + 2 H(+). The catalysed reaction is 13-cis-retinal + NAD(+) + H2O = 13-cis-retinoate + NADH + 2 H(+). It carries out the reaction 3-deoxyglucosone + NAD(+) + H2O = 2-dehydro-3-deoxy-D-gluconate + NADH + 2 H(+). It catalyses the reaction (E)-4-hydroxynon-2-enal + NAD(+) + H2O = (E)-4-hydroxynon-2-enoate + NADH + 2 H(+). The enzyme catalyses malonaldehyde + NAD(+) + H2O = 3-oxopropanoate + NADH + 2 H(+). The catalysed reaction is hexanal + NAD(+) + H2O = hexanoate + NADH + 2 H(+). It carries out the reaction propanal + NAD(+) + H2O = propanoate + NADH + 2 H(+). It catalyses the reaction acetaldehyde + NAD(+) + H2O = acetate + NADH + 2 H(+). The enzyme catalyses benzaldehyde + NAD(+) + H2O = benzoate + NADH + 2 H(+). The catalysed reaction is 4-aminobutanal + NAD(+) + H2O = 4-aminobutanoate + NADH + 2 H(+). Its pathway is cofactor metabolism; retinol metabolism. Functionally, cytosolic dehydrogenase that catalyzes the irreversible oxidation of a wide range of aldehydes to their corresponding carboxylic acid. Functions downstream of retinol dehydrogenases and catalyzes the oxidation of retinaldehyde into retinoic acid, the second step in the oxidation of retinol/vitamin A into retinoic acid. This pathway is crucial to control the levels of retinol and retinoic acid, two important molecules which excess can be teratogenic and cytotoxic. Also oxidizes aldehydes resulting from lipid peroxidation like (E)-4-hydroxynon-2-enal/HNE, malonaldehyde and hexanal that form protein adducts and are highly cytotoxic. By participating for instance to the clearance of (E)-4-hydroxynon-2-enal/HNE in the lens epithelium prevents the formation of HNE-protein adducts and lens opacification. Also functions downstream of fructosamine-3-kinase in the fructosamine degradation pathway by catalyzing the oxidation of 3-deoxyglucosone, the carbohydrate product of fructosamine 3-phosphate decomposition, which is itself a potent glycating agent that may react with lysine and arginine side-chains of proteins. Also has an aminobutyraldehyde dehydrogenase activity and is probably part of an alternative pathway for the biosynthesis of GABA/4-aminobutanoate in midbrain, thereby playing a role in GABAergic synaptic transmission. The protein is Aldehyde dehydrogenase 1A1 of Macaca fascicularis (Crab-eating macaque).